A 523-amino-acid polypeptide reads, in one-letter code: MAGQQALLLFGFILPGLLFSEAAKILTVSLVGGSHFLLMHQISQILQDHGHNVTMLLQKGNLLLPGFKEEEKSYKVFNWFLPEDCNEEFKRSFHSFMEKTFGGRCKFEHFLNIMELLGHHCSHLLRRKDVMKSLKNENFDLVIVEMFDYCPFLVAEKLGKPFVAILPSALGTVDFGLPSPLSYVPVFYSLLTDQMDFWGRVKNFLMFFEFFKKQWKIQSAYDDTIKEHFPDDSRPVLSHLLTKAELWFVNTDFAFDFARPLLPNTVCIGGLMSKPVKPVPQEFENFITKFGDSGFVLVSLGSMVSFIRSQEVLKEMNAAFAHLPQGVIWKYNPSHWPKDIKLAPNVKIVHWLPQNDLLGHPRIRLFVSHGGMNSIMEAIQHGVPMVGIPLFGDQHENLLRVKAKKFGVSIQLKQIKAETLALKMKQVIEDKRYKSAAEAASIIRRSQPLTPAQRLVGWINHILQTGGAAHLKPHAFQQPWYEQYLLDVFLFLLVVTLGTMWLCGKLLGLVARWLCGARKLKKA.

An N-terminal signal peptide occupies residues 1-22; sequence MAGQQALLLFGFILPGLLFSEA. The Extracellular portion of the chain corresponds to 23–483; the sequence is AKILTVSLVG…HAFQQPWYEQ (461 aa). The N-linked (GlcNAc...) asparagine glycan is linked to N52. Residues 484 to 504 form a helical membrane-spanning segment; the sequence is YLLDVFLFLLVVTLGTMWLCG. Residues 505–523 lie on the Cytoplasmic side of the membrane; that stretch reads KLLGLVARWLCGARKLKKA.

It belongs to the UDP-glycosyltransferase family.

It localises to the membrane. It catalyses the reaction glucuronate acceptor + UDP-alpha-D-glucuronate = acceptor beta-D-glucuronoside + UDP + H(+). Functionally, UDP-glucuronosyltransferases catalyze phase II biotransformation reactions in which lipophilic substrates are conjugated with glucuronic acid to increase water solubility and enhance excretion. They are of major importance in the conjugation and subsequent elimination of potentially toxic xenobiotics and endogenous compounds. The protein is UDP-glucuronosyltransferase 3A1 (UGT3A1) of Bos taurus (Bovine).